A 122-amino-acid polypeptide reads, in one-letter code: Neutral phospholipase A2 agkistrodotoxin (122 aa).

Cystine bridges form between C26-C115, C28-C44, C43-C95, C49-C122, C50-C88, C57-C81, and C75-C86. Ca(2+) contacts are provided by Y27, G29, and G31. H47 is an active-site residue. D48 lines the Ca(2+) pocket. D89 is an active-site residue.

Requires Ca(2+) as cofactor. As to expression, expressed by the venom gland.

It is found in the secreted. The enzyme catalyses a 1,2-diacyl-sn-glycero-3-phosphocholine + H2O = a 1-acyl-sn-glycero-3-phosphocholine + a fatty acid + H(+). In terms of biological role, snake venom phospholipase A2 (PLA2) that inhibits neuromuscular transmission by blocking acetylcholine release from the nerve termini. PLA2 catalyzes the calcium-dependent hydrolysis of the 2-acyl groups in 3-sn-phosphoglycerides. The sequence is that of Neutral phospholipase A2 agkistrodotoxin from Gloydius halys (Chinese water mocassin).